The following is a 171-amino-acid chain: UPF0260 protein Nham_1404 (171 aa).

The protein belongs to the UPF0260 family.

The sequence is that of UPF0260 protein Nham_1404 from Nitrobacter hamburgensis (strain DSM 10229 / NCIMB 13809 / X14).